A 117-amino-acid polypeptide reads, in one-letter code: Ribonuclease P protein component (117 aa).

Belongs to the RnpA family. Consists of a catalytic RNA component (M1 or rnpB) and a protein subunit.

The enzyme catalyses Endonucleolytic cleavage of RNA, removing 5'-extranucleotides from tRNA precursor.. Its function is as follows. RNaseP catalyzes the removal of the 5'-leader sequence from pre-tRNA to produce the mature 5'-terminus. It can also cleave other RNA substrates such as 4.5S RNA. The protein component plays an auxiliary but essential role in vivo by binding to the 5'-leader sequence and broadening the substrate specificity of the ribozyme. The protein is Ribonuclease P protein component of Desulforapulum autotrophicum (strain ATCC 43914 / DSM 3382 / VKM B-1955 / HRM2) (Desulfobacterium autotrophicum).